The chain runs to 379 residues: Cytoplasmic tRNA 2-thiolation protein 1 (379 aa).

It belongs to the TtcA family. CTU1/NCS6/ATPBD3 subfamily.

It is found in the cytoplasm. It functions in the pathway tRNA modification; 5-methoxycarbonylmethyl-2-thiouridine-tRNA biosynthesis. Plays a central role in 2-thiolation of mcm(5)S(2)U at tRNA wobble positions of tRNA(Lys), tRNA(Glu) and tRNA(Gln). Directly binds tRNAs and probably acts by catalyzing adenylation of tRNAs, an intermediate required for 2-thiolation. It is unclear whether it acts as a sulfurtransferase that transfers sulfur from thiocarboxylated URM1 onto the uridine of tRNAs at wobble position. Prior mcm(5) tRNA modification by the elongator complex is required for 2-thiolation. May also be involved in protein urmylation. The chain is Cytoplasmic tRNA 2-thiolation protein 1 from Lodderomyces elongisporus (strain ATCC 11503 / CBS 2605 / JCM 1781 / NBRC 1676 / NRRL YB-4239) (Yeast).